Reading from the N-terminus, the 689-residue chain is Beta-galactosidase Pbg (689 aa).

Arg-118 is a binding site for substrate. A Zn(2+)-binding site is contributed by Cys-122. Position 156 (Asn-156) interacts with substrate. Glu-157 functions as the Proton donor in the catalytic mechanism. The Zn(2+) site is built by Cys-162, Cys-164, and Cys-167. Catalysis depends on Glu-318, which acts as the Nucleophile. Substrate-binding positions include Trp-326 and 366-369; that span reads EKFH.

Belongs to the glycosyl hydrolase 42 family.

It carries out the reaction Hydrolysis of terminal non-reducing beta-D-galactose residues in beta-D-galactosides.. This Clostridium perfringens (strain ATCC 13124 / DSM 756 / JCM 1290 / NCIMB 6125 / NCTC 8237 / Type A) protein is Beta-galactosidase Pbg.